The chain runs to 138 residues: ATP synthase epsilon chain, chloroplastic (138 aa).

It belongs to the ATPase epsilon chain family. In terms of assembly, F-type ATPases have 2 components, CF(1) - the catalytic core - and CF(0) - the membrane proton channel. CF(1) has five subunits: alpha(3), beta(3), gamma(1), delta(1), epsilon(1). CF(0) has three main subunits: a, b and c.

Its subcellular location is the plastid. The protein localises to the chloroplast thylakoid membrane. In terms of biological role, produces ATP from ADP in the presence of a proton gradient across the membrane. The protein is ATP synthase epsilon chain, chloroplastic of Huperzia lucidula (Shining clubmoss).